Reading from the N-terminus, the 598-residue chain is Elongation factor 4 (598 aa).

The 183-residue stretch at Gln-2–Lys-184 folds into the tr-type G domain. GTP contacts are provided by residues Asp-14 to Thr-19 and Asn-131 to Asp-134.

The protein belongs to the TRAFAC class translation factor GTPase superfamily. Classic translation factor GTPase family. LepA subfamily.

It is found in the cell inner membrane. It carries out the reaction GTP + H2O = GDP + phosphate + H(+). Required for accurate and efficient protein synthesis under certain stress conditions. May act as a fidelity factor of the translation reaction, by catalyzing a one-codon backward translocation of tRNAs on improperly translocated ribosomes. Back-translocation proceeds from a post-translocation (POST) complex to a pre-translocation (PRE) complex, thus giving elongation factor G a second chance to translocate the tRNAs correctly. Binds to ribosomes in a GTP-dependent manner. This Azoarcus sp. (strain BH72) protein is Elongation factor 4.